The sequence spans 359 residues: Type-1 angiotensin II receptor (359 aa).

The Extracellular segment spans residues Met-1 to Asn-25. N-linked (GlcNAc...) asparagine glycosylation occurs at Asn-4. Angiotensin II-binding residues include Gln-15 and Asp-17. 2 disulfides stabilise this stretch: Cys-18–Cys-274 and Cys-101–Cys-180. The helical transmembrane segment at Tyr-26–Phe-55 threads the bilayer. Over Tyr-56–Thr-61 the chain is Cytoplasmic. A helical transmembrane segment spans residues Val-62–Ala-89. Over Met-90–Asn-98 the chain is Extracellular. A helical transmembrane segment spans residues Tyr-99 to Asp-125. At Arg-126–Thr-141 the chain is on the cytoplasmic side. A helical membrane pass occupies residues Met-142–Ile-165. At His-166–Thr-190 the chain is on the extracellular side. Residue Arg-167 coordinates angiotensin II. An N-linked (GlcNAc...) asparagine glycan is attached at Asn-176. Residues Phe-182, His-183, and Tyr-184 each contribute to the angiotensin II site. Asn-188 carries N-linked (GlcNAc...) asparagine glycosylation. A helical membrane pass occupies residues Leu-191 to Thr-216. Lys-199 lines the angiotensin II pocket. Residues Leu-217–Phe-239 are Cytoplasmic-facing. The helical transmembrane segment at Lys-240–Leu-268 threads the bilayer. The Extracellular portion of the chain corresponds to Gly-269–Asp-278. A helical transmembrane segment spans residues Ile-279–Phe-304. At Leu-305–Glu-359 the chain is on the cytoplasmic side. Over residues Ser-335–Lys-350 the composition is skewed to polar residues. Positions Ser-335–Glu-359 are disordered. A lipid anchor (S-palmitoyl cysteine) is attached at Cys-355.

The protein belongs to the G-protein coupled receptor 1 family. In terms of assembly, interacts with MAS1. Interacts with ARRB1. Interacts with FLNA (via filamin repeat 21); increases PKA-mediated phosphorylation of FLNA. In terms of processing, C-terminal Ser or Thr residues may be phosphorylated.

Its subcellular location is the cell membrane. Receptor for angiotensin II, a vasoconstricting peptide, which acts as a key regulator of blood pressure and sodium retention by the kidney. The activated receptor in turn couples to G-alpha proteins G(q) (GNAQ, GNA11, GNA14 or GNA15) and thus activates phospholipase C and increases the cytosolic Ca(2+) concentrations, which in turn triggers cellular responses such as stimulation of protein kinase C. The sequence is that of Type-1 angiotensin II receptor (AGTR1) from Oryctolagus cuniculus (Rabbit).